Consider the following 465-residue polypeptide: Monogalactosyldiacylglycerol synthase 3, chloroplastic (465 aa).

UDP contacts are provided by residues His86, Arg255, 365–369 (GTIAE), and Glu387.

The protein belongs to the glycosyltransferase 28 family. As to expression, expressed mainly in roots. Detected in flowers, leaves, stems, siliques and pollen tubes.

It is found in the plastid. Its subcellular location is the chloroplast outer membrane. It carries out the reaction a 1,2-diacyl-sn-glycerol + UDP-alpha-D-galactose = a 1,2-diacyl-3-O-(beta-D-galactosyl)-sn-glycerol + UDP + H(+). It catalyses the reaction 1,2-di-(9Z,12Z-octadecadienoyl)-sn-glycerol + UDP-alpha-D-galactose = 1,2-di-(9Z,12Z-octadecadienoyl)-3-beta-D-galactosyl-sn-glycerol + UDP + H(+). The catalysed reaction is 1-(9Z-octadecenoyl)-2-hexadecanoyl-sn-glycerol + UDP-alpha-D-galactose = 1-(9Z-octadecenoyl)-2-hexadecanoyl-3-beta-D-galactosyl-sn-glycerol + UDP + H(+). The enzyme catalyses 1,2-di-(9Z-octadecenoyl)-sn-glycerol + UDP-alpha-D-galactose = 1,2-di-(9Z-octadecenoyl)-3-beta-D-galactosyl-sn-glycerol + UDP + H(+). Inhibited by galvestine-1. Involved in the synthesis of monogalactosyldiacylglycerol, the major structural component of photosynthetic membranes and in the chloroplast envelope biogenesis. Can use both prokaryotic (18:1/16:0) or eukaryotic (18:2/18:2) 1,2-diacylglycerol species, but operates with some preference for the eukaryotic one. Plays a minor role in galactolipid synthesis in chloroplasts. Is essential for membrane lipid remodeling in phosphate-starved roots. Acts as the major factor involved in digalactosyldiacylglycerol (DGDG) biosynthesis in phosphate-starved roots. Does not seem to be required for plant growth under nutrient-sufficient conditions. Required for membrane lipid remodeling in plants grown in acidic conditions. The polypeptide is Monogalactosyldiacylglycerol synthase 3, chloroplastic (Arabidopsis thaliana (Mouse-ear cress)).